Here is a 542-residue protein sequence, read N- to C-terminus: Leucine-rich repeat-containing protein 56 (542 aa).

LRR repeat units follow at residues asparagine 94–leucine 115, histidine 117–proline 138, alanine 139–glutamate 160, glutamine 161–glutamine 182, and arginine 186–threonine 206. The region spanning asparagine 207–leucine 250 is the LRRCT domain. Disordered stretches follow at residues leucine 308 to serine 377, leucine 396 to arginine 475, and arginine 507 to threonine 542. Positions arginine 416 to glutamate 426 are enriched in basic and acidic residues. The segment covering proline 522–alanine 532 has biased composition (low complexity).

The protein belongs to the LRRC56 family. In terms of assembly, interacts with IFT88.

It localises to the cell projection. Its subcellular location is the cilium. Functionally, required for the assembly of dynein arms. This chain is Leucine-rich repeat-containing protein 56 (LRRC56), found in Homo sapiens (Human).